The chain runs to 276 residues: NAD kinase (276 aa).

D68 (proton acceptor) is an active-site residue. NAD(+)-binding positions include 68-69 (DG), R73, 138-139 (NE), K149, D168, 179-184 (TAYSLS), and Q237.

This sequence belongs to the NAD kinase family. It depends on a divalent metal cation as a cofactor.

The protein localises to the cytoplasm. It carries out the reaction NAD(+) + ATP = ADP + NADP(+) + H(+). Functionally, involved in the regulation of the intracellular balance of NAD and NADP, and is a key enzyme in the biosynthesis of NADP. Catalyzes specifically the phosphorylation on 2'-hydroxyl of the adenosine moiety of NAD to yield NADP. This is NAD kinase from Methanopyrus kandleri (strain AV19 / DSM 6324 / JCM 9639 / NBRC 100938).